Consider the following 117-residue polypeptide: Resistin-like gamma (117 aa).

Residues Met1–Thr29 form the signal peptide. Cystine bridges form between Cys61–Cys114, Cys73–Cys113, Cys82–Cys99, Cys84–Cys101, and Cys88–Cys103.

Belongs to the resistin/FIZZ family. In terms of assembly, homodimer. Heterodimer with RETNLB. Expressed in colon, lung, spleen, pancreas, ileum and bone marrow (at protein level). In colon, found throughout the crypt and surface epithelium, including goblet cells (at protein level). Highest expression is observed in bone marrow, spleen and lung, with lower levels in other tissues. Detected at low levels in granulocytes, but not found in monocytes or lymphocytes. Has very weak expression in white adipose tissue.

It is found in the secreted. In terms of biological role, probable hormone. Promotes chemotaxis in myeloid cells. The sequence is that of Resistin-like gamma from Mus musculus (Mouse).